The chain runs to 222 residues: Phosphoribosylformylglycinamidine synthase subunit PurQ (222 aa).

Residues 2 to 222 (SVAIVRFPGT…DNLLHIAEMK (221 aa)) enclose the Glutamine amidotransferase type-1 domain. C86 acts as the Nucleophile in catalysis. Residues H194 and E196 contribute to the active site.

Part of the FGAM synthase complex composed of 1 PurL, 1 PurQ and 2 PurS subunits.

The protein resides in the cytoplasm. The catalysed reaction is N(2)-formyl-N(1)-(5-phospho-beta-D-ribosyl)glycinamide + L-glutamine + ATP + H2O = 2-formamido-N(1)-(5-O-phospho-beta-D-ribosyl)acetamidine + L-glutamate + ADP + phosphate + H(+). It catalyses the reaction L-glutamine + H2O = L-glutamate + NH4(+). It functions in the pathway purine metabolism; IMP biosynthesis via de novo pathway; 5-amino-1-(5-phospho-D-ribosyl)imidazole from N(2)-formyl-N(1)-(5-phospho-D-ribosyl)glycinamide: step 1/2. Functionally, part of the phosphoribosylformylglycinamidine synthase complex involved in the purines biosynthetic pathway. Catalyzes the ATP-dependent conversion of formylglycinamide ribonucleotide (FGAR) and glutamine to yield formylglycinamidine ribonucleotide (FGAM) and glutamate. The FGAM synthase complex is composed of three subunits. PurQ produces an ammonia molecule by converting glutamine to glutamate. PurL transfers the ammonia molecule to FGAR to form FGAM in an ATP-dependent manner. PurS interacts with PurQ and PurL and is thought to assist in the transfer of the ammonia molecule from PurQ to PurL. The chain is Phosphoribosylformylglycinamidine synthase subunit PurQ from Helicobacter hepaticus (strain ATCC 51449 / 3B1).